The primary structure comprises 345 residues: Phosphoribosylformylglycinamidine cyclo-ligase (345 aa).

Belongs to the AIR synthase family.

Its subcellular location is the cytoplasm. The enzyme catalyses 2-formamido-N(1)-(5-O-phospho-beta-D-ribosyl)acetamidine + ATP = 5-amino-1-(5-phospho-beta-D-ribosyl)imidazole + ADP + phosphate + H(+). Its pathway is purine metabolism; IMP biosynthesis via de novo pathway; 5-amino-1-(5-phospho-D-ribosyl)imidazole from N(2)-formyl-N(1)-(5-phospho-D-ribosyl)glycinamide: step 2/2. The protein is Phosphoribosylformylglycinamidine cyclo-ligase of Salmonella typhi.